The following is a 163-amino-acid chain: 3-isopropylmalate dehydratase small subunit (163 aa).

The protein belongs to the LeuD family. LeuD type 2 subfamily. Heterodimer of LeuC and LeuD.

It catalyses the reaction (2R,3S)-3-isopropylmalate = (2S)-2-isopropylmalate. It participates in amino-acid biosynthesis; L-leucine biosynthesis; L-leucine from 3-methyl-2-oxobutanoate: step 2/4. Its function is as follows. Catalyzes the isomerization between 2-isopropylmalate and 3-isopropylmalate, via the formation of 2-isopropylmaleate. The protein is 3-isopropylmalate dehydratase small subunit (leuD) of Clostridium acetobutylicum (strain ATCC 824 / DSM 792 / JCM 1419 / IAM 19013 / LMG 5710 / NBRC 13948 / NRRL B-527 / VKM B-1787 / 2291 / W).